The sequence spans 248 residues: ATP synthase subunit a, chloroplastic (248 aa).

5 helical membrane-spanning segments follow: residues 37–57, 96–116, 135–155, 200–220, and 221–241; these read AQVL…AVLA, VPFI…GALF, INTT…AGLH, LVVA…MMFL, and GLFT…AYIG.

This sequence belongs to the ATPase A chain family. In terms of assembly, F-type ATPases have 2 components, CF(1) - the catalytic core - and CF(0) - the membrane proton channel. CF(1) has five subunits: alpha(3), beta(3), gamma(1), delta(1), epsilon(1). CF(0) has four main subunits: a, b, b' and c.

It localises to the plastid. The protein localises to the chloroplast thylakoid membrane. In terms of biological role, key component of the proton channel; it plays a direct role in the translocation of protons across the membrane. The sequence is that of ATP synthase subunit a, chloroplastic from Marchantia polymorpha (Common liverwort).